A 436-amino-acid chain; its full sequence is 3-ketoacyl-CoA thiolase (436 aa).

C99 acts as the Acyl-thioester intermediate in catalysis. Active-site proton acceptor residues include H392 and C422.

It belongs to the thiolase-like superfamily. Thiolase family. As to quaternary structure, heterotetramer of two alpha chains (FadJ) and two beta chains (FadI).

The protein resides in the cytoplasm. It catalyses the reaction an acyl-CoA + acetyl-CoA = a 3-oxoacyl-CoA + CoA. The protein operates within lipid metabolism; fatty acid beta-oxidation. Functionally, catalyzes the final step of fatty acid oxidation in which acetyl-CoA is released and the CoA ester of a fatty acid two carbons shorter is formed. The chain is 3-ketoacyl-CoA thiolase from Salmonella newport (strain SL254).